The chain runs to 204 residues: Large ribosomal subunit protein eL15 (204 aa).

This sequence belongs to the eukaryotic ribosomal protein eL15 family. In terms of assembly, component of the large ribosomal subunit.

The protein localises to the cytoplasm. Component of the large ribosomal subunit. The ribosome is a large ribonucleoprotein complex responsible for the synthesis of proteins in the cell. The polypeptide is Large ribosomal subunit protein eL15 (rpl15) (Silurus meridionalis (Southern catfish)).